Consider the following 235-residue polypeptide: Probable ribosomal RNA small subunit methyltransferase A (235 aa).

6 residues coordinate S-adenosyl-L-methionine: His-9, Leu-11, Gly-34, Glu-55, Asp-78, and Asn-93.

Belongs to the class I-like SAM-binding methyltransferase superfamily. rRNA adenine N(6)-methyltransferase family. RsmA subfamily.

It localises to the cytoplasm. Specifically dimethylates two adjacent adenosines in the loop of a conserved hairpin near the 3'-end of 16S rRNA in the 30S particle. May play a critical role in biogenesis of 30S subunits. In Pyrobaculum islandicum (strain DSM 4184 / JCM 9189 / GEO3), this protein is Probable ribosomal RNA small subunit methyltransferase A.